Consider the following 171-residue polypeptide: Large ribosomal subunit protein uL10 (171 aa).

It belongs to the universal ribosomal protein uL10 family. As to quaternary structure, part of the ribosomal stalk of the 50S ribosomal subunit. The N-terminus interacts with L11 and the large rRNA to form the base of the stalk. The C-terminus forms an elongated spine to which L12 dimers bind in a sequential fashion forming a multimeric L10(L12)X complex.

Its function is as follows. Forms part of the ribosomal stalk, playing a central role in the interaction of the ribosome with GTP-bound translation factors. This is Large ribosomal subunit protein uL10 from Maricaulis maris (strain MCS10) (Caulobacter maris).